The following is a 258-amino-acid chain: uncharacterized protein (258 aa).

An N-terminal signal peptide occupies residues 1–23 (MVWCHYILLVLTFFLFTTFFTAA). Residues 24-64 (CPAIFTWLNSLFRLSNDSPHVVHTSIAEVGDIEDGRVDKDG) are Cytoplasmic-facing. The helical transmembrane segment at 65-85 (VLFVDLEFFLGCLPFFFFALV) threads the bilayer. The Extracellular portion of the chain corresponds to 86–123 (DQSSSSSVCKPLSPSDAKRSSNSLLRLSLVSSNDSDSS). The N-linked (GlcNAc...) asparagine glycan is linked to Asn-118. Residues 124–144 (VSVSTFAFFFFFLFFLFFVFT) traverse the membrane as a helical segment. Residues 145 to 230 (CTFSSELTSS…SSSISFRISS (86 aa)) lie on the Cytoplasmic side of the membrane. A helical transmembrane segment spans residues 231–251 (IFFLCSLVFMWFFNCFSDLNV). Topologically, residues 252–258 (LLQIKHS) are extracellular.

It localises to the membrane. This is an uncharacterized protein from Saccharomyces cerevisiae (strain ATCC 204508 / S288c) (Baker's yeast).